The following is a 101-amino-acid chain: Omega-scoloptoxin(10)-Ssd1b (101 aa).

An N-terminal signal peptide occupies residues 1–23 (MNKLTIIFFTILLLTYIIVEKEA).

In terms of processing, contains 3 disulfide bonds. Expressed by the venom gland.

The protein localises to the secreted. Functionally, voltage-gated calcium channel inhibitor. This is Omega-scoloptoxin(10)-Ssd1b from Scolopendra dehaani (Thai centipede).